The chain runs to 329 residues: Eukaryotic translation initiation factor 3 subunit I (329 aa).

5 WD repeats span residues 8–47, 50–89, 145–184, 187–226, and 284–323; these read GHQR…RLGT, GHGG…NIAT, ITDS…KIHS, EHTH…LLKE, and GHFG…FDYT.

This sequence belongs to the eIF-3 subunit I family. Component of the eukaryotic translation initiation factor 3 (eIF-3) complex.

Its subcellular location is the cytoplasm. Functionally, component of the eukaryotic translation initiation factor 3 (eIF-3) complex, which is involved in protein synthesis of a specialized repertoire of mRNAs and, together with other initiation factors, stimulates binding of mRNA and methionyl-tRNAi to the 40S ribosome. The eIF-3 complex specifically targets and initiates translation of a subset of mRNAs involved in cell proliferation. This Bombyx mori (Silk moth) protein is Eukaryotic translation initiation factor 3 subunit I.